Consider the following 136-residue polypeptide: Nanos homolog 2 (136 aa).

The segment at 27-51 (KQRQEGEVAEEPNSRPQEKSEQDLE) is disordered. The segment covering 28–48 (QRQEGEVAEEPNSRPQEKSEQ) has biased composition (basic and acidic residues). Residues 60 to 114 (ICNFCKHNGESRHVYTSHQLKTPEGVVVCPILRHYVCPLCGATGDQAHTLKYCPL) form a Nanos-type zinc finger. C61, C64, H77, C88, C96, C99, H107, and C112 together coordinate Zn(2+). 2 consecutive short sequence motifs (C2HC) follow at residues 61–88 (CNFCKHNGESRHVYTSHQLKTPEGVVVC) and 96–112 (CPLCGATGDQAHTLKYC).

It belongs to the nanos family. Interacts with CNOT1, CNOT3, CNOT6L, CNOT7 and CNOT9. As to expression, predominantly expressed in male germ cells. Expressed in self-renewing spermatogonial stem cells and developing gonads.

It is found in the cytoplasm. Its subcellular location is the P-body. The protein resides in the perinuclear region. Plays a key role in the sexual differentiation of germ cells by promoting the male fate but suppressing the female fate. Represses the female fate pathways by suppressing meiosis, which in turn results in the promotion of the male fate. Maintains the suppression of meiosis by preventing STRA8 expression, which is required for premeiotic DNA replication, after CYP26B1 is decreased. Regulates the localization of the CCR4-NOT deadenylation complex to P-bodies and plays a role in recruiting the complex to trigger the degradation of mRNAs involved in meiosis. Required for the maintenance of the spermatogonial stem cell population. Not essential for the assembly of P-bodies but is required for the maintenance of their normal state. This chain is Nanos homolog 2 (Nanos2), found in Mus musculus (Mouse).